The sequence spans 234 residues: Phosphoribosylformylglycinamidine synthase subunit PurQ (234 aa).

The region spanning 6 to 234 (VGVVVFPGSN…ESLFRSLTGV (229 aa)) is the Glutamine amidotransferase type-1 domain. Cys-89 acts as the Nucleophile in catalysis. Residues His-206 and Glu-208 contribute to the active site.

In terms of assembly, part of the FGAM synthase complex composed of 1 PurL, 1 PurQ and 2 PurS subunits.

The protein localises to the cytoplasm. It catalyses the reaction N(2)-formyl-N(1)-(5-phospho-beta-D-ribosyl)glycinamide + L-glutamine + ATP + H2O = 2-formamido-N(1)-(5-O-phospho-beta-D-ribosyl)acetamidine + L-glutamate + ADP + phosphate + H(+). The enzyme catalyses L-glutamine + H2O = L-glutamate + NH4(+). It functions in the pathway purine metabolism; IMP biosynthesis via de novo pathway; 5-amino-1-(5-phospho-D-ribosyl)imidazole from N(2)-formyl-N(1)-(5-phospho-D-ribosyl)glycinamide: step 1/2. Its function is as follows. Part of the phosphoribosylformylglycinamidine synthase complex involved in the purines biosynthetic pathway. Catalyzes the ATP-dependent conversion of formylglycinamide ribonucleotide (FGAR) and glutamine to yield formylglycinamidine ribonucleotide (FGAM) and glutamate. The FGAM synthase complex is composed of three subunits. PurQ produces an ammonia molecule by converting glutamine to glutamate. PurL transfers the ammonia molecule to FGAR to form FGAM in an ATP-dependent manner. PurS interacts with PurQ and PurL and is thought to assist in the transfer of the ammonia molecule from PurQ to PurL. This chain is Phosphoribosylformylglycinamidine synthase subunit PurQ, found in Chlorobium chlorochromatii (strain CaD3).